The sequence spans 172 residues: S-ribosylhomocysteine lyase (172 aa).

Fe cation is bound by residues H54, H58, and C128.

This sequence belongs to the LuxS family. Homodimer. Fe cation is required as a cofactor.

The enzyme catalyses S-(5-deoxy-D-ribos-5-yl)-L-homocysteine = (S)-4,5-dihydroxypentane-2,3-dione + L-homocysteine. Its function is as follows. Involved in the synthesis of autoinducer 2 (AI-2) which is secreted by bacteria and is used to communicate both the cell density and the metabolic potential of the environment. The regulation of gene expression in response to changes in cell density is called quorum sensing. Catalyzes the transformation of S-ribosylhomocysteine (RHC) to homocysteine (HC) and 4,5-dihydroxy-2,3-pentadione (DPD). This chain is S-ribosylhomocysteine lyase, found in Photobacterium profundum (strain SS9).